A 1035-amino-acid chain; its full sequence is Ephrin type-A receptor 6 (1035 aa).

A signal peptide spans 1–22; the sequence is MGGCEVREFLLQFGFFLPLLTA. The Extracellular portion of the chain corresponds to 23–549; the sequence is WTGDCSHVSN…MAAEQGQILV (527 aa). Residues 33–211 form the Eph LBD domain; the sequence is QVVLLDTSTV…FYKKCPFTVR (179 aa). Fibronectin type-III domains lie at 330-440 and 441-536; these read PPSA…TDQD and APSL…TGDE. 3 N-linked (GlcNAc...) asparagine glycosylation sites follow: N342, N396, and N409. A helical transmembrane segment spans residues 550–570; sequence IATAAVGGFTLLVILTLFFLI. At 571 to 1035 the chain is on the cytoplasmic side; it reads TGRCQWYIKA…MHIQEKGFHV (465 aa). Y605 and Y611 each carry phosphotyrosine; by autocatalysis. In terms of domain architecture, Protein kinase spans 630-943; sequence IRIERVIGAG…RNPSALHTLV (314 aa). Residues 636–644 and K662 each bind ATP; that span reads IGAGEFGEV. D797 (proton acceptor) is an active-site residue. Phosphotyrosine; by autocatalysis is present on residues Y830 and Y977. The SAM domain occupies 960–1024; it reads PLFVTVGDWL…VSSIQTLRLH (65 aa). Positions 1033–1035 match the PDZ-binding motif; that stretch reads FHV.

It belongs to the protein kinase superfamily. Tyr protein kinase family. Ephrin receptor subfamily. As to quaternary structure, heterotetramer upon binding of the ligand. The heterotetramer is composed of an ephrin dimer and a receptor dimer. Oligomerization is probably required to induce biological responses. Interacts (via SAM domain) with ANKS1A (via SAM domain). As to expression, brain.

It is found in the membrane. The enzyme catalyses L-tyrosyl-[protein] + ATP = O-phospho-L-tyrosyl-[protein] + ADP + H(+). In terms of biological role, receptor tyrosine kinase which binds promiscuously GPI-anchored ephrin-A family ligands residing on adjacent cells, leading to contact-dependent bidirectional signaling into neighboring cells. The signaling pathway downstream of the receptor is referred to as forward signaling while the signaling pathway downstream of the ephrin ligand is referred to as reverse signaling. This is Ephrin type-A receptor 6 (Epha6) from Rattus norvegicus (Rat).